The chain runs to 250 residues: 5'-nucleotidase SurE (250 aa).

The a divalent metal cation site is built by D9, D10, S40, and N92.

The protein belongs to the SurE nucleotidase family. Requires a divalent metal cation as cofactor.

The protein resides in the cytoplasm. It carries out the reaction a ribonucleoside 5'-phosphate + H2O = a ribonucleoside + phosphate. Its function is as follows. Nucleotidase that shows phosphatase activity on nucleoside 5'-monophosphates. The sequence is that of 5'-nucleotidase SurE from Idiomarina loihiensis (strain ATCC BAA-735 / DSM 15497 / L2-TR).